We begin with the raw amino-acid sequence, 346 residues long: [LysW]-lysine/[LysW]-ornithine hydrolase (346 aa).

His68 contacts Zn(2+). Residue Asp70 is part of the active site. Asp92 serves as a coordination point for Zn(2+). Glu122 (proton acceptor) is an active-site residue. Residues Glu123, Glu146, and His317 each contribute to the Zn(2+) site.

It belongs to the peptidase M20A family. LysK subfamily. Zn(2+) is required as a cofactor. It depends on Co(2+) as a cofactor.

The protein resides in the cytoplasm. The catalysed reaction is [amino-group carrier protein]-C-terminal-gamma-(L-lysyl)-L-glutamate + H2O = [amino-group carrier protein]-C-terminal-L-glutamate + L-lysine. It carries out the reaction [amino-group carrier protein]-C-terminal-gamma-(L-ornithyl)-L-glutamate + H2O = [amino-group carrier protein]-C-terminal-L-glutamate + L-ornithine. It participates in amino-acid biosynthesis; L-lysine biosynthesis via AAA pathway; L-lysine from L-alpha-aminoadipate (Thermus route): step 5/5. It functions in the pathway amino-acid biosynthesis; L-arginine biosynthesis. Functionally, catalyzes the release of L-lysine from [LysW]-gamma-L-lysine and the release of L-ornithine from [LysW]-L-ornithine. The sequence is that of [LysW]-lysine/[LysW]-ornithine hydrolase from Saccharolobus islandicus (strain M.16.4 / Kamchatka #3) (Sulfolobus islandicus).